The sequence spans 155 residues: Endoribonuclease YbeY (155 aa).

Zn(2+)-binding residues include His-114, His-118, and His-124.

Belongs to the endoribonuclease YbeY family. Zn(2+) is required as a cofactor.

The protein localises to the cytoplasm. Functionally, single strand-specific metallo-endoribonuclease involved in late-stage 70S ribosome quality control and in maturation of the 3' terminus of the 16S rRNA. This is Endoribonuclease YbeY from Citrobacter koseri (strain ATCC BAA-895 / CDC 4225-83 / SGSC4696).